The chain runs to 310 residues: Tyrosine recombinase XerC (310 aa).

The Core-binding (CB) domain occupies 11-97; it reads NSLQKPLERF…SLRSFFDFLI (87 aa). One can recognise a Tyr recombinase domain in the interval 118-298; the sequence is PLPKNLDVDE…DFQHLAQAYD (181 aa). Active-site residues include R157, K181, H250, R253, and H276. The active-site O-(3'-phospho-DNA)-tyrosine intermediate is Y285.

This sequence belongs to the 'phage' integrase family. XerC subfamily. Forms a cyclic heterotetrameric complex composed of two molecules of XerC and two molecules of XerD.

Its subcellular location is the cytoplasm. In terms of biological role, site-specific tyrosine recombinase, which acts by catalyzing the cutting and rejoining of the recombining DNA molecules. The XerC-XerD complex is essential to convert dimers of the bacterial chromosome into monomers to permit their segregation at cell division. It also contributes to the segregational stability of plasmids. The polypeptide is Tyrosine recombinase XerC (Vibrio parahaemolyticus serotype O3:K6 (strain RIMD 2210633)).